The chain runs to 79 residues: Calcium/calmodulin-dependent protein kinase II inhibitor 2 (79 aa).

Positions 43–69 (KRPPKLGQIGRAKRVVIEDDRIDEVLK) are inhibitory domain.

The protein belongs to the CAMK2N family.

It is found in the nucleus. The protein resides in the cytoplasm. It localises to the cytosol. Its function is as follows. Potent and specific cellular inhibitor of CaM-kinase II (CAMK2). Traps Ca(2+)/calmodulin on CAMK2. This Xenopus tropicalis (Western clawed frog) protein is Calcium/calmodulin-dependent protein kinase II inhibitor 2 (camk2n2).